The chain runs to 296 residues: Protoheme IX farnesyltransferase (296 aa).

9 helical membrane passes run Val8–Ala28, Tyr35–Phe55, Val84–Ala104, Leu107–Met127, Val132–Ala152, Leu162–Phe182, Ile208–Ala228, Gly229–Arg249, and Leu263–Ser283.

This sequence belongs to the UbiA prenyltransferase family. Protoheme IX farnesyltransferase subfamily.

It localises to the cell inner membrane. It carries out the reaction heme b + (2E,6E)-farnesyl diphosphate + H2O = Fe(II)-heme o + diphosphate. It participates in porphyrin-containing compound metabolism; heme O biosynthesis; heme O from protoheme: step 1/1. Functionally, converts heme B (protoheme IX) to heme O by substitution of the vinyl group on carbon 2 of heme B porphyrin ring with a hydroxyethyl farnesyl side group. This chain is Protoheme IX farnesyltransferase, found in Serratia proteamaculans (strain 568).